A 420-amino-acid polypeptide reads, in one-letter code: Transmembrane protease serine 11B-like protein (420 aa).

Residues 1 to 19 (MTVSKLRPVIASRKSFPPW) are Cytoplasmic-facing. The helical; Signal-anchor for type II membrane protein transmembrane segment at 20–40 (MIILGVLGVLAILGLIIGLLV) threads the bilayer. At 41–420 (HFLAVENKIY…RDWIASKTGI (380 aa)) the chain is on the extracellular side. The SEA domain occupies 48-165 (KIYYYQGSFK…GSLKLTEITK (118 aa)). 2 N-linked (GlcNAc...) asparagine glycosylation sites follow: asparagine 111 and asparagine 146. Residues 189–419 (ITGGSTAQKG…YRDWIASKTG (231 aa)) form the Peptidase S1 domain. Cysteine 214 and cysteine 230 are disulfide-bonded. Histidine 229 serves as the catalytic Charge relay system. Asparagine 239 carries N-linked (GlcNAc...) asparagine glycosylation. Aspartate 274 (charge relay system) is an active-site residue. 2 disulfides stabilise this stretch: cysteine 339–cysteine 355 and cysteine 366–cysteine 395. The Charge relay system role is filled by serine 370.

Belongs to the peptidase S1 family.

It is found in the membrane. It localises to the cell membrane. Inhibited by aprotinin, leupeptin, benzamidine, SERPINA1, SPINT1 and SPINT2. Serine protease. The chain is Transmembrane protease serine 11B-like protein (Tmprss11bnl) from Rattus norvegicus (Rat).